We begin with the raw amino-acid sequence, 575 residues long: Dihydroxy-acid dehydratase (575 aa).

The segment at 1–25 (MPTTDSARAADIKQPDIKPRSRDVT) is disordered. The span at 8 to 25 (RAADIKQPDIKPRSRDVT) shows a compositional bias: basic and acidic residues. Cys64 contributes to the [2Fe-2S] cluster binding site. A Mg(2+)-binding site is contributed by Asp96. [2Fe-2S] cluster is bound at residue Cys137. Residues Asp138 and Lys139 each contribute to the Mg(2+) site. Lys139 bears the N6-carboxylysine mark. Cys214 is a [2Fe-2S] cluster binding site. Residue Glu465 participates in Mg(2+) binding. Ser491 acts as the Proton acceptor in catalysis.

The protein belongs to the IlvD/Edd family. As to quaternary structure, homodimer. It depends on [2Fe-2S] cluster as a cofactor. Mg(2+) is required as a cofactor.

The catalysed reaction is (2R)-2,3-dihydroxy-3-methylbutanoate = 3-methyl-2-oxobutanoate + H2O. It carries out the reaction (2R,3R)-2,3-dihydroxy-3-methylpentanoate = (S)-3-methyl-2-oxopentanoate + H2O. Its pathway is amino-acid biosynthesis; L-isoleucine biosynthesis; L-isoleucine from 2-oxobutanoate: step 3/4. The protein operates within amino-acid biosynthesis; L-valine biosynthesis; L-valine from pyruvate: step 3/4. Functions in the biosynthesis of branched-chain amino acids. Catalyzes the dehydration of (2R,3R)-2,3-dihydroxy-3-methylpentanoate (2,3-dihydroxy-3-methylvalerate) into 2-oxo-3-methylpentanoate (2-oxo-3-methylvalerate) and of (2R)-2,3-dihydroxy-3-methylbutanoate (2,3-dihydroxyisovalerate) into 2-oxo-3-methylbutanoate (2-oxoisovalerate), the penultimate precursor to L-isoleucine and L-valine, respectively. The polypeptide is Dihydroxy-acid dehydratase (Mycobacterium avium (strain 104)).